The sequence spans 180 residues: uncharacterized protein (180 aa).

Residues Met1–Val93 form a disordered region. Low complexity-rich tracts occupy residues Ser9–Ser25 and Leu47–Gln64.

This is an uncharacterized protein from Homo sapiens (Human).